We begin with the raw amino-acid sequence, 393 residues long: UDP-N-acetylglucosamine--N-acetylmuramyl-(pentapeptide) pyrophosphoryl-undecaprenol N-acetylglucosamine transferase (393 aa).

Residues 15–17 (TAG), Asn-129, Arg-171, Ser-211, and Gln-322 contribute to the UDP-N-acetyl-alpha-D-glucosamine site.

Belongs to the glycosyltransferase 28 family. MurG subfamily.

It is found in the cell membrane. The catalysed reaction is di-trans,octa-cis-undecaprenyl diphospho-N-acetyl-alpha-D-muramoyl-L-alanyl-D-glutamyl-meso-2,6-diaminopimeloyl-D-alanyl-D-alanine + UDP-N-acetyl-alpha-D-glucosamine = di-trans,octa-cis-undecaprenyl diphospho-[N-acetyl-alpha-D-glucosaminyl-(1-&gt;4)]-N-acetyl-alpha-D-muramoyl-L-alanyl-D-glutamyl-meso-2,6-diaminopimeloyl-D-alanyl-D-alanine + UDP + H(+). It functions in the pathway cell wall biogenesis; peptidoglycan biosynthesis. Functionally, cell wall formation. Catalyzes the transfer of a GlcNAc subunit on undecaprenyl-pyrophosphoryl-MurNAc-pentapeptide (lipid intermediate I) to form undecaprenyl-pyrophosphoryl-MurNAc-(pentapeptide)GlcNAc (lipid intermediate II). In Bifidobacterium longum (strain DJO10A), this protein is UDP-N-acetylglucosamine--N-acetylmuramyl-(pentapeptide) pyrophosphoryl-undecaprenol N-acetylglucosamine transferase.